The following is a 63-amino-acid chain: Actiflagelin (63 aa).

5 cysteine pairs are disulfide-bonded: C3–C24, C6–C11, C17–C39, C43–C55, and C56–C61. Residue P63 is modified to Proline amide.

Post-translationally, contains 5 disulfide bonds. In terms of tissue distribution, expressed by the venom gland.

The protein resides in the secreted. Its function is as follows. Unknown. In vitro, this toxin activates sperm motility when tested on OF1 male mice. The chain is Actiflagelin from Walterinnesia aegyptia (Desert black snake).